We begin with the raw amino-acid sequence, 125 residues long: Small ribosomal subunit protein uS13 (125 aa).

Residues 93–125 (RKGLPVRGQRTKTNARTRKGPKRTVAGKKKAGR) form a disordered region.

This sequence belongs to the universal ribosomal protein uS13 family. Part of the 30S ribosomal subunit. Forms a loose heterodimer with protein S19. Forms two bridges to the 50S subunit in the 70S ribosome.

Its function is as follows. Located at the top of the head of the 30S subunit, it contacts several helices of the 16S rRNA. In the 70S ribosome it contacts the 23S rRNA (bridge B1a) and protein L5 of the 50S subunit (bridge B1b), connecting the 2 subunits; these bridges are implicated in subunit movement. Contacts the tRNAs in the A and P-sites. In Paenarthrobacter aurescens (strain TC1), this protein is Small ribosomal subunit protein uS13.